A 181-amino-acid chain; its full sequence is Nucleoside diphosphate kinase, mitochondrial (181 aa).

Basic residues predominate over residues 1-10; it reads MFRGGTHRLR. The segment at 1–22 is disordered; that stretch reads MFRGGTHRLRGQPGLSLPHGPR. The N-terminal 24 residues, 1-24, are a transit peptide targeting the mitochondrion; that stretch reads MFRGGTHRLRGQPGLSLPHGPRCY. K40, F88, R116, T122, R133, and N143 together coordinate ATP. Residue H146 is the Pros-phosphohistidine intermediate of the active site.

Belongs to the NDK family. Requires Mg(2+) as cofactor. As to expression, highest levels in the liver and kidney with lower levels in the heart, brain and breast muscle.

The protein localises to the mitochondrion intermembrane space. The protein resides in the mitochondrion matrix. It catalyses the reaction a 2'-deoxyribonucleoside 5'-diphosphate + ATP = a 2'-deoxyribonucleoside 5'-triphosphate + ADP. It carries out the reaction a ribonucleoside 5'-diphosphate + ATP = a ribonucleoside 5'-triphosphate + ADP. Feedback inhibition by ADP. Major role in the synthesis of nucleoside triphosphates other than ATP. The ATP gamma phosphate is transferred to the NDP beta phosphate via a ping-pong mechanism, using a phosphorylated active-site intermediate. Through the catalyzed exchange of gamma-phosphate between di- and triphosphonucleosides participates in regulation of intracellular nucleotide homeostasis. Binds to anionic phospholipids, predominantly to cardiolipin; the binding inhibits its phosphotransfer activity. Acts as a mitochondria-specific NDK coupled to respiration. Promotes the redistribution of cardiolipin between the mitochondrial inner membrane and outer membrane which is implicated in pro-apoptotic signaling. In Columba livia (Rock dove), this protein is Nucleoside diphosphate kinase, mitochondrial (NME4).